We begin with the raw amino-acid sequence, 508 residues long: Abl interactor 1 (508 aa).

Position 2 is an N-acetylalanine (Ala2). The required for binding to WASF1 stretch occupies residues Ala18 to Gln79. One can recognise a t-SNARE coiled-coil homology domain in the interval Lys45–Arg107. Tyr53 bears the Phosphotyrosine mark. 3 disordered regions span residues Lys159–Leu290, Ala306–Gln375, and Asn388–Tyr421. Polar residues predominate over residues Gly161–Asn175. Thr174 and Thr178 each carry phosphothreonine. Residues Ser183 and Ser187 each carry the phosphoserine modification. Tyr213 is subject to Phosphotyrosine; by ABL1. Thr215 carries the post-translational modification Phosphothreonine. Residues Ser216, Ser222, and Ser225 each carry the phosphoserine modification. Over residues Ser222–Arg235 the composition is skewed to polar residues. Residues Ser248–Gly258 show a composition bias toward low complexity. Residues Val278 to Leu290 are compositionally biased toward pro residues. The segment covering Pro307–Asn322 has biased composition (polar residues). 2 positions are modified to phosphoserine: Ser319 and Ser323. Residues Pro337 to Pro347 show a composition bias toward polar residues. 2 stretches are compositionally biased toward pro residues: residues Pro393–Asp403 and Ser410–Val419. The SH3 domain maps to Asn446 to His505. Phosphotyrosine is present on Tyr455. Ser466 carries the phosphoserine modification. The residue at position 507 (Thr507) is a Phosphothreonine.

This sequence belongs to the ABI family. As to quaternary structure, interacts with ABL1, ENAH, STX1A, SNAP25, VAMP2, EPS8, and through its N-terminus with WASF1. Part of a complex consisting of ABI1, STX1A and SNAP25. Part of a complex consisting of ABI1, EPS8 and SOS1. Interacts with SOS1, SOS2, GRB2, SPTA1 and the first SH3 domain of NCK1. Isoform 6 does not interact with NCK1. Component of the WAVE2 complex composed of ABI1, CYFIP1/SRA1, NCKAP1/NAP1 (NCKAP1l/HEM1 in hematopoietic cells) and WASF2/WAVE2. Interacts (via SH3 domain) with SHANK2 and SHANK3, but not SHANK1; the interaction is direct. Interacts with the heterodimer MYC:MAX; the interaction may enhance MYC:MAX transcriptional activity. Interacts with FNBP1L (via the SH3 domain), WASF2, and CDC42, but only in the presence of FNBP1L. In terms of assembly, (Microbial infection) Interacts with human cytomegalovirus/HHV-5 protein UL135. Post-translationally, phosphorylated on tyrosine residues after serum stimulation or induction by v-Abl. Seems to be phosphorylated at Tyr-53 by ABL1, required for nuclear but not for synaptic localization. As to expression, widely expressed, with highest expression in brain.

It localises to the cytoplasm. The protein localises to the nucleus. The protein resides in the cell projection. Its subcellular location is the lamellipodium. It is found in the filopodium. It localises to the growth cone. The protein localises to the postsynaptic density. The protein resides in the cytoskeleton. Functionally, may act in negative regulation of cell growth and transformation by interacting with nonreceptor tyrosine kinases ABL1 and/or ABL2. May play a role in regulation of EGF-induced Erk pathway activation. Involved in cytoskeletal reorganization and EGFR signaling. Together with EPS8 participates in transduction of signals from Ras to Rac. In vitro, a trimeric complex of ABI1, EPS8 and SOS1 exhibits Rac specific guanine nucleotide exchange factor (GEF) activity and ABI1 seems to act as an adapter in the complex. Regulates ABL1/c-Abl-mediated phosphorylation of ENAH. Recruits WASF1 to lamellipodia and there seems to regulate WASF1 protein level. In brain, seems to regulate the dendritic outgrowth and branching as well as to determine the shape and number of synaptic contacts of developing neurons. The sequence is that of Abl interactor 1 from Homo sapiens (Human).